We begin with the raw amino-acid sequence, 549 residues long: Glucose-6-phosphate isomerase (549 aa).

Residue glutamate 355 is the Proton donor of the active site. Catalysis depends on residues histidine 386 and lysine 514.

The protein belongs to the GPI family.

The protein resides in the cytoplasm. It carries out the reaction alpha-D-glucose 6-phosphate = beta-D-fructose 6-phosphate. It functions in the pathway carbohydrate biosynthesis; gluconeogenesis. The protein operates within carbohydrate degradation; glycolysis; D-glyceraldehyde 3-phosphate and glycerone phosphate from D-glucose: step 2/4. Catalyzes the reversible isomerization of glucose-6-phosphate to fructose-6-phosphate. The sequence is that of Glucose-6-phosphate isomerase from Pectobacterium carotovorum subsp. carotovorum (strain PC1).